Consider the following 280-residue polypeptide: 4-hydroxy-3-methylbut-2-enyl diphosphate reductase (280 aa).

Cys12 is a binding site for [4Fe-4S] cluster. His40 and His72 together coordinate (2E)-4-hydroxy-3-methylbut-2-enyl diphosphate. 2 residues coordinate dimethylallyl diphosphate: His40 and His72. Isopentenyl diphosphate is bound by residues His40 and His72. Cys94 contacts [4Fe-4S] cluster. His122 is a (2E)-4-hydroxy-3-methylbut-2-enyl diphosphate binding site. His122 lines the dimethylallyl diphosphate pocket. His122 serves as a coordination point for isopentenyl diphosphate. Glu124 acts as the Proton donor in catalysis. Thr160 provides a ligand contact to (2E)-4-hydroxy-3-methylbut-2-enyl diphosphate. Residue Cys188 participates in [4Fe-4S] cluster binding. (2E)-4-hydroxy-3-methylbut-2-enyl diphosphate-binding residues include Ser216, Asn218, and Ser260. Positions 216, 218, and 260 each coordinate dimethylallyl diphosphate. 3 residues coordinate isopentenyl diphosphate: Ser216, Asn218, and Ser260.

Belongs to the IspH family. Requires [4Fe-4S] cluster as cofactor.

It carries out the reaction isopentenyl diphosphate + 2 oxidized [2Fe-2S]-[ferredoxin] + H2O = (2E)-4-hydroxy-3-methylbut-2-enyl diphosphate + 2 reduced [2Fe-2S]-[ferredoxin] + 2 H(+). The enzyme catalyses dimethylallyl diphosphate + 2 oxidized [2Fe-2S]-[ferredoxin] + H2O = (2E)-4-hydroxy-3-methylbut-2-enyl diphosphate + 2 reduced [2Fe-2S]-[ferredoxin] + 2 H(+). It participates in isoprenoid biosynthesis; dimethylallyl diphosphate biosynthesis; dimethylallyl diphosphate from (2E)-4-hydroxy-3-methylbutenyl diphosphate: step 1/1. It functions in the pathway isoprenoid biosynthesis; isopentenyl diphosphate biosynthesis via DXP pathway; isopentenyl diphosphate from 1-deoxy-D-xylulose 5-phosphate: step 6/6. Functionally, catalyzes the conversion of 1-hydroxy-2-methyl-2-(E)-butenyl 4-diphosphate (HMBPP) into a mixture of isopentenyl diphosphate (IPP) and dimethylallyl diphosphate (DMAPP). Acts in the terminal step of the DOXP/MEP pathway for isoprenoid precursor biosynthesis. The protein is 4-hydroxy-3-methylbut-2-enyl diphosphate reductase of Pelobacter propionicus (strain DSM 2379 / NBRC 103807 / OttBd1).